Reading from the N-terminus, the 1462-residue chain is Protein peg1 (1462 aa).

Disordered regions lie at residues 528-563 (SFSK…SRER) and 573-592 (FHST…SIAI). Composition is skewed to low complexity over residues 538–552 (SSNS…RLGL) and 574–589 (HSTS…HSPS). Ser-599 is subject to Phosphoserine. The tract at residues 838–928 (SSTHQEHLSK…NCSEESLDDH (91 aa)) is disordered. Residues 847–866 (KNLPTLNTSSSSNSSQTDLL) show a composition bias toward low complexity. Basic and acidic residues predominate over residues 870-896 (GKGETKETEMQSPIESKEGLLSKDTHI). The residue at position 1221 (Ser-1221) is a Phosphoserine. Residues 1342-1367 (TLIAEIADLQGLYEFTQQRLQSLNTE) are a coiled coil.

It belongs to the CLASP family. Interacts with microtubules. Interacts with dhc1, mal3 and tea1.

It is found in the cytoplasm. Its subcellular location is the cytoskeleton. The protein resides in the spindle. It localises to the microtubule organizing center. The protein localises to the spindle pole body. In terms of biological role, microtubule binding protein that regulates the stability of dynamic microtubules. Required for mitotic spindle formation. The polypeptide is Protein peg1 (peg1) (Schizosaccharomyces pombe (strain 972 / ATCC 24843) (Fission yeast)).